The following is a 260-amino-acid chain: NH(3)-dependent NAD(+) synthetase (260 aa).

Residue 31–38 (GLSGGLDS) coordinates ATP. Residue aspartate 37 coordinates Mg(2+). Residue arginine 112 participates in deamido-NAD(+) binding. Position 132 (threonine 132) interacts with ATP. Glutamate 137 provides a ligand contact to Mg(2+). ATP contacts are provided by lysine 161 and serine 183.

The protein belongs to the NAD synthetase family. In terms of assembly, homodimer.

The enzyme catalyses deamido-NAD(+) + NH4(+) + ATP = AMP + diphosphate + NAD(+) + H(+). It participates in cofactor biosynthesis; NAD(+) biosynthesis; NAD(+) from deamido-NAD(+) (ammonia route): step 1/1. In terms of biological role, catalyzes the ATP-dependent amidation of deamido-NAD to form NAD. Uses ammonia as a nitrogen source. The chain is NH(3)-dependent NAD(+) synthetase from Helicobacter pylori (strain HPAG1).